The sequence spans 182 residues: UPF0397 protein BT9727_2423 (182 aa).

5 helical membrane passes run 9-29 (VVAI…GFSI), 40-60 (AILT…IGLI), 71-91 (WGIW…MGFI), 114-134 (ITGL…DIIV), and 142-162 (IVIQ…VLGL).

This sequence belongs to the UPF0397 family.

It is found in the cell membrane. In Bacillus thuringiensis subsp. konkukian (strain 97-27), this protein is UPF0397 protein BT9727_2423.